We begin with the raw amino-acid sequence, 657 residues long: uncharacterized protein (657 aa).

The N-terminal stretch at Met-1–Ser-26 is a signal peptide. Residue Cys-27 is the site of N-palmitoyl cysteine attachment. Cys-27 carries the S-diacylglycerol cysteine lipid modification. Disordered regions lie at residues Ile-291–Thr-316, Arg-468–Ile-496, and Lys-516–Asn-563. A compositionally biased stretch (polar residues) spans Lys-294–Ser-304. Basic and acidic residues predominate over residues Leu-469–Ile-495. The segment covering Lys-516 to Thr-525 has biased composition (polar residues). The segment covering Glu-526 to Gly-545 has biased composition (basic and acidic residues). Residues Lys-546–Gly-559 are compositionally biased toward low complexity.

To T.pallidum TmpC.

Its subcellular location is the cell membrane. This is an uncharacterized protein from Mycoplasma pneumoniae (strain ATCC 29342 / M129 / Subtype 1) (Mycoplasmoides pneumoniae).